The following is a 320-amino-acid chain: UDP-3-O-acyl-N-acetylglucosamine deacetylase (320 aa).

Residues His-92, His-251, and Asp-255 each coordinate Zn(2+). His-278 functions as the Proton donor in the catalytic mechanism.

This sequence belongs to the LpxC family. It depends on Zn(2+) as a cofactor.

The enzyme catalyses a UDP-3-O-[(3R)-3-hydroxyacyl]-N-acetyl-alpha-D-glucosamine + H2O = a UDP-3-O-[(3R)-3-hydroxyacyl]-alpha-D-glucosamine + acetate. It functions in the pathway glycolipid biosynthesis; lipid IV(A) biosynthesis; lipid IV(A) from (3R)-3-hydroxytetradecanoyl-[acyl-carrier-protein] and UDP-N-acetyl-alpha-D-glucosamine: step 2/6. In terms of biological role, catalyzes the hydrolysis of UDP-3-O-myristoyl-N-acetylglucosamine to form UDP-3-O-myristoylglucosamine and acetate, the committed step in lipid A biosynthesis. The polypeptide is UDP-3-O-acyl-N-acetylglucosamine deacetylase (Psychrobacter cryohalolentis (strain ATCC BAA-1226 / DSM 17306 / VKM B-2378 / K5)).